Here is a 333-residue protein sequence, read N- to C-terminus: MDKTVLDANLDPLKGKTIGVIGYGNQGRVQATIMRENGLNVIVGNVKDKYYELAKKEGFEVYEIDEAVRRSDVALLLIPDEVMKEVYEKKIAPVLQGKKEFVLDFASGYNVAFGLIRPPKSVDTIMVAPRMVGEGIMDLHKQGKGYPVLLGVKQDASGKAWDYAKAIAKGIGAIPGGIAVISSFEEEALLDLMSEHTWVPILFGAIKACYDIAVKEYGVSPEAALLEFYASGELAEIARLIAEEGIFNQMVHHSTTSQYGTLTRMFKYYDVVRRIVENEAKYIWDGSFAKEWSLEQQAGYPVFYRLWELATQSEMAKAEKELYKLLGRKVKND.

The region spanning 1–182 is the KARI N-terminal Rossmann domain; it reads MDKTVLDANL…AIPGGIAVIS (182 aa). One can recognise a KARI C-terminal knotted domain in the interval 183 to 329; that stretch reads SFEEEALLDL…KELYKLLGRK (147 aa).

The protein belongs to the ketol-acid reductoisomerase family.

The catalysed reaction is (2R)-2,3-dihydroxy-3-methylbutanoate + NADP(+) = (2S)-2-acetolactate + NADPH + H(+). The enzyme catalyses (2R,3R)-2,3-dihydroxy-3-methylpentanoate + NADP(+) = (S)-2-ethyl-2-hydroxy-3-oxobutanoate + NADPH + H(+). The protein operates within amino-acid biosynthesis; L-isoleucine biosynthesis; L-isoleucine from 2-oxobutanoate: step 2/4. It participates in amino-acid biosynthesis; L-valine biosynthesis; L-valine from pyruvate: step 2/4. In Saccharolobus solfataricus (strain ATCC 35092 / DSM 1617 / JCM 11322 / P2) (Sulfolobus solfataricus), this protein is Putative ketol-acid reductoisomerase 2 (ilvC2).